The following is a 136-amino-acid chain: Large ribosomal subunit protein uL16c (136 aa).

Belongs to the universal ribosomal protein uL16 family. As to quaternary structure, part of the 50S ribosomal subunit.

Its subcellular location is the plastid. The protein resides in the chloroplast. The sequence is that of Large ribosomal subunit protein uL16c from Saccharum hybrid (Sugarcane).